A 447-amino-acid chain; its full sequence is Phosphoglucosamine mutase (447 aa).

Serine 102 serves as the catalytic Phosphoserine intermediate. Positions 102, 241, 243, and 245 each coordinate Mg(2+). Serine 102 carries the phosphoserine modification.

It belongs to the phosphohexose mutase family. Mg(2+) serves as cofactor. Activated by phosphorylation.

The enzyme catalyses alpha-D-glucosamine 1-phosphate = D-glucosamine 6-phosphate. In terms of biological role, catalyzes the conversion of glucosamine-6-phosphate to glucosamine-1-phosphate. This Delftia acidovorans (strain DSM 14801 / SPH-1) protein is Phosphoglucosamine mutase.